A 357-amino-acid chain; its full sequence is tRNA-specific 2-thiouridylase MnmA (357 aa).

Residues 10–17 (GISGGVDS) and isoleucine 36 each bind ATP. Cysteine 98 (nucleophile) is an active-site residue. Cysteine 98 and cysteine 194 are joined by a disulfide. ATP is bound at residue glycine 122. The segment at 144–146 (KDQ) is interaction with tRNA. Cysteine 194 serves as the catalytic Cysteine persulfide intermediate. An interaction with tRNA region spans residues 303–304 (RY).

This sequence belongs to the MnmA/TRMU family.

The protein resides in the cytoplasm. It carries out the reaction S-sulfanyl-L-cysteinyl-[protein] + uridine(34) in tRNA + AH2 + ATP = 2-thiouridine(34) in tRNA + L-cysteinyl-[protein] + A + AMP + diphosphate + H(+). Catalyzes the 2-thiolation of uridine at the wobble position (U34) of tRNA, leading to the formation of s(2)U34. The protein is tRNA-specific 2-thiouridylase MnmA of Chlorobium phaeovibrioides (strain DSM 265 / 1930) (Prosthecochloris vibrioformis (strain DSM 265)).